The sequence spans 180 residues: Ribosome maturation factor RimM (180 aa).

Residues 104–177 (PEEFHDHQLV…RVVVDPPGGL (74 aa)) enclose the PRC barrel domain.

This sequence belongs to the RimM family. Binds ribosomal protein uS19.

It localises to the cytoplasm. In terms of biological role, an accessory protein needed during the final step in the assembly of 30S ribosomal subunit, possibly for assembly of the head region. Essential for efficient processing of 16S rRNA. May be needed both before and after RbfA during the maturation of 16S rRNA. It has affinity for free ribosomal 30S subunits but not for 70S ribosomes. In Salinispora arenicola (strain CNS-205), this protein is Ribosome maturation factor RimM.